We begin with the raw amino-acid sequence, 488 residues long: Dipeptide and tripeptide permease A (488 aa).

Residues 1–35 (MSTANTPEDEQKPSLNAFKQPRAFYLIFSIELWER) are Cytoplasmic-facing. A helical transmembrane segment spans residues 36–56 (FGYYGLQGIMAVYLVKMLGMS). The Periplasmic portion of the chain corresponds to 57–60 (EAEA). A helical membrane pass occupies residues 61–81 (ITVFAAFTALVYGFVAIGGWL). Topologically, residues 82–90 (GDKILGTKR) are cytoplasmic. Residues 91 to 111 (VIVLGAIVLAIGYAMVAFSDH) form a helical membrane-spanning segment. Over 112–114 (DKD) the chain is Periplasmic. A helical membrane pass occupies residues 115-135 (MIYWGLATIAVGNGLFKANPS). The Cytoplasmic segment spans residues 136 to 154 (SLLATCYEKDDPQLDGAFT). A helical transmembrane segment spans residues 155-175 (MYYMSINVGSFLSMLATPWLA). The Periplasmic segment spans residues 176–179 (ANYG). A helical membrane pass occupies residues 180 to 200 (WDVAFALSVVGMLITLANFML). Residues 201–219 (CRGWIKDKGSRPDFEPLNY) are Cytoplasmic-facing. Residues 220 to 240 (LKLLLTLVGIVALTAVSTWLL) traverse the membrane as a helical segment. A topological domain (periplasmic) is located at residue His-241. Residues 242–262 (NNEVATWSLAIISLGIILIFA) form a helical membrane-spanning segment. Topologically, residues 263–275 (RETFMMKGVARRK) are cytoplasmic. A helical membrane pass occupies residues 276–296 (MIVAFLLMVEAVVFFVLYDQM). Over 297-324 (PTSLNFFAIHNVEHAILGFSVEPEQFQS) the chain is Periplasmic. The helical transmembrane segment at 325–345 (LNPFWIMLASPLLAAIYNFMG) threads the bilayer. Over 346-353 (DKLPMPYK) the chain is Cytoplasmic. A helical membrane pass occupies residues 354-374 (FTVGMFLSATAFLVLPLGASM). Residues 375 to 391 (ANEAGIVSSWWLVASYG) lie on the Periplasmic side of the membrane. A helical membrane pass occupies residues 392-412 (FQSIGELMISGLGLAMVAQLV). Over 413 to 415 (PQR) the chain is Cytoplasmic. Residues 416-436 (LMGFIMGAWFLTSAAAAIIAG) form a helical membrane-spanning segment. Over 437 to 460 (KVASLMAVPEDVQNAHASLEIYSS) the chain is Periplasmic. A helical membrane pass occupies residues 461 to 481 (VFLQIGIVTGVIALLMLFTAP). Over 482-488 (MLSKMTQ) the chain is Cytoplasmic.

It belongs to the major facilitator superfamily. Proton-dependent oligopeptide transporter (POT/PTR) (TC 2.A.17) family. DtpA subfamily.

It is found in the cell inner membrane. In terms of biological role, proton-dependent permease that transports di- and tripeptides. This is Dipeptide and tripeptide permease A from Proteus mirabilis (strain HI4320).